Reading from the N-terminus, the 184-residue chain is Peptide deformylase (184 aa).

Fe cation-binding residues include C111 and H154. The active site involves E155. H158 contributes to the Fe cation binding site.

Belongs to the polypeptide deformylase family. The cofactor is Fe(2+).

It catalyses the reaction N-terminal N-formyl-L-methionyl-[peptide] + H2O = N-terminal L-methionyl-[peptide] + formate. Functionally, removes the formyl group from the N-terminal Met of newly synthesized proteins. Requires at least a dipeptide for an efficient rate of reaction. N-terminal L-methionine is a prerequisite for activity but the enzyme has broad specificity at other positions. The protein is Peptide deformylase of Pediococcus pentosaceus (strain ATCC 25745 / CCUG 21536 / LMG 10740 / 183-1w).